The chain runs to 805 residues: MSHLVSSSLGTTTTATPTSRSPHTNHSTPYNQNSITSNRSSPVPKNSVNSRIIPQTMNPPIDMKSNNILNPEKDTDTSRGDHSESKASSISSASGTTTTNNNNVSNNNSTGKTQIVFIHKLYDMLHDESISHLIWWSPSLDSFYVTPGEEFSRVLSQYFKHTNIASFIRQLNMYGFHKVNEPFLNQDDQQQQQQLQSNRWEFRHSTNQFRKGDTESLKNIKRRSSKTLNAQKEVVNIKSLPPTSHPMEYNTGYSYQNEDSAHYFVHHHSITTMQSPADMRPRSPSTPIPMQPLAQQQQQQQQQQQQQQQQLPSQPVPNGPPVFSGPIPPGAVNQSPQEYLTRPSILNNVQGSFENATNFKFVELTNQINLLRNDFFTMNNRYEILQNELKYQTADSMAVLEILEKLSNDNRIATDIRDLKNVVSQRMQRLNNQFIPQQSNFAPHIPGQQQQQQHGNSVSSNYHLESTNVSRNPSTTNLNVAPQPYPLNPHYTIYANNRASGSSEINNGVFRAREDSNNSKRNLSVYDPLQPVPSRNSSRILIEESTPTHPPTNFNPQQSQSQSQVQLGPAMPPQGFRNRAESTYSPLSHSSNKSQILNKAPTPVNHSPLVQQQQKEAKQELNDSSVAPPSQSSLPVTRPLSRQQQQQQQTLHHPSTTSSRTNSLPNPVAEHPAPQSSYFMQRNSFNTVYEHQKSLRVPSPKRVRYATPPRSIPEQPISSTAPTTMITSTSKPTSTSGAAISRSENHSVVSLTGGALPSVSELDKSIRTGSSVSLPPIKSIKDNDNKNDNGNSDDNGNDHKKRKLE.

Low complexity predominate over residues 1 to 24 (MSHLVSSSLGTTTTATPTSRSPHT). The tract at residues 1 to 110 (MSHLVSSSLG…NNNVSNNNST (110 aa)) is disordered. The segment covering 25–69 (NHSTPYNQNSITSNRSSPVPKNSVNSRIIPQTMNPPIDMKSNNIL) has biased composition (polar residues). The segment covering 71–85 (PEKDTDTSRGDHSES) has biased composition (basic and acidic residues). A compositionally biased stretch (low complexity) spans 86 to 110 (KASSISSASGTTTTNNNNVSNNNST). A DNA-binding region spans residues 117-226 (FIHKLYDMLH…LKNIKRRSSK (110 aa)). Disordered stretches follow at residues 273 to 336 (MQSP…NQSP), 438 to 483 (QSNF…VAPQ), 513 to 675 (REDS…PAPQ), 691 to 746 (HQKS…SENH), and 759 to 805 (VSEL…RKLE). A compositionally biased stretch (low complexity) spans 295–310 (QQQQQQQQQQQQQQQQ). Composition is skewed to polar residues over residues 454–480 (HGNS…NLNV) and 533–556 (PSRN…NFNP). Residues 557-566 (QQSQSQSQVQ) show a composition bias toward low complexity. 3 stretches are compositionally biased toward polar residues: residues 581 to 597 (ESTY…SQIL), 604 to 614 (VNHSPLVQQQQ), and 622 to 635 (NDSS…SSLP). Low complexity predominate over residues 637-659 (TRPLSRQQQQQQQTLHHPSTTSS). Over residues 716–738 (PISSTAPTTMITSTSKPTSTSGA) the composition is skewed to polar residues.

Belongs to the HSF family.

It localises to the nucleus. Its function is as follows. Transcription factor that plays a role of repressor of filamentous growth and flocculation. Antagonizes functions of SFL2 and FLO8. Plays a role in the hyphal repression induced by secreted factors like dodecanol by competitors such as Pseudomonas aeruginosa and Burkholderia cenocepacia. In Candida albicans (strain SC5314 / ATCC MYA-2876) (Yeast), this protein is Transcription factor SFL1 (SFL1).